The sequence spans 174 residues: Adenine phosphoribosyltransferase (174 aa).

This sequence belongs to the purine/pyrimidine phosphoribosyltransferase family. As to quaternary structure, homodimer.

It localises to the cytoplasm. The catalysed reaction is AMP + diphosphate = 5-phospho-alpha-D-ribose 1-diphosphate + adenine. It participates in purine metabolism; AMP biosynthesis via salvage pathway; AMP from adenine: step 1/1. Functionally, catalyzes a salvage reaction resulting in the formation of AMP, that is energically less costly than de novo synthesis. The protein is Adenine phosphoribosyltransferase of Lachnoclostridium phytofermentans (strain ATCC 700394 / DSM 18823 / ISDg) (Clostridium phytofermentans).